The primary structure comprises 719 residues: Cyclin-dependent kinase 11.1 (719 aa).

Basic and acidic residues-rich tracts occupy residues M1–K20, K38–I48, and K78–V129. Disordered stretches follow at residues M1–D215 and E231–E315. Residues H130–K140 show a composition bias toward basic residues. The segment covering H141–K163 has biased composition (basic and acidic residues). Residues H164–S174 are compositionally biased toward basic residues. 2 stretches are compositionally biased toward basic and acidic residues: residues H191–D215 and D264–A274. The span at E275 to D285 shows a compositional bias: acidic residues. The Protein kinase domain maps to Y356–F647. ATP is bound by residues V362–V370 and K385. D484 (proton acceptor) is an active-site residue. Positions E657 to P689 are disordered. Over residues K678–P689 the composition is skewed to basic and acidic residues.

Belongs to the protein kinase superfamily. CMGC Ser/Thr protein kinase family. CDC2/CDKX subfamily. Broadly expressed in somatic and germ line cells (at protein level). Not expressed in sperm (at protein level).

The protein resides in the nucleus. It carries out the reaction L-seryl-[protein] + ATP = O-phospho-L-seryl-[protein] + ADP + H(+). The enzyme catalyses L-threonyl-[protein] + ATP = O-phospho-L-threonyl-[protein] + ADP + H(+). Its function is as follows. Probable cyclin-dependent kinase whose activity is most likely regulated by the cyclin cyl-1/Cylin-L. Important for normal oocyte and sperm development; probably required during multiple stages of gametogenesis. Plays a role in the activation of RAS-ERK signaling in the germ line. Also acts partially redundantly with cdk-11.2 to ensure embryonic viability. This chain is Cyclin-dependent kinase 11.1, found in Caenorhabditis elegans.